The chain runs to 52 residues: Insulin (52 aa).

Intrachain disulfides connect cysteine 7–cysteine 38, cysteine 19–cysteine 51, and cysteine 37–cysteine 42.

This sequence belongs to the insulin family. In terms of assembly, heterodimer of a B chain and an A chain linked by two disulfide bonds.

It localises to the secreted. Its function is as follows. Insulin decreases blood glucose concentration. It increases cell permeability to monosaccharides, amino acids and fatty acids. It accelerates glycolysis, the pentose phosphate cycle, and glycogen synthesis in liver. In Atractosteus spatula (Alligator gar), this protein is Insulin (ins).